The chain runs to 295 residues: Putative attaching and effacing protein homolog (295 aa).

Positions 1 to 25 (MSHYKTGHKQPRFRYSVLARCVAWA) are cleaved as a signal peptide.

It belongs to the intimin/invasin family.

The polypeptide is Putative attaching and effacing protein homolog (eaeH) (Escherichia coli (strain K12)).